Reading from the N-terminus, the 452-residue chain is Glycine receptor subunit alpha-2 (452 aa).

A signal peptide spans methionine 1–cysteine 27. At lysine 28–tyrosine 256 the chain is on the extracellular side. Asparagine 72 carries an N-linked (GlcNAc...) asparagine glycan. Arginine 99 serves as a coordination point for glycine. Strychnine is bound at residue arginine 99. N-linked (GlcNAc...) asparagine glycosylation is present at asparagine 103. Serine 163 is a binding site for glycine. Cysteine 172 and cysteine 186 form a disulfide bridge. Residues glutamate 226 and glutamate 228 each contribute to the Zn(2+) site. A disulfide bridge connects residues cysteine 232 and cysteine 243. Glycine is bound at residue threonine 238. Histidine 249 is a binding site for Zn(2+). The chain crosses the membrane as a helical span at residues tyrosine 257–isoleucine 278. Residues asparagine 279–alanine 283 are Cytoplasmic-facing. A helical membrane pass occupies residues proline 284 to serine 304. At arginine 305–lysine 315 the chain is on the extracellular side. A helical transmembrane segment spans residues alanine 316 to alanine 336. Topologically, residues alanine 337–threonine 420 are cytoplasmic. The helical transmembrane segment at isoleucine 421–tyrosine 441 threads the bilayer. Topologically, residues lysine 442–lysine 452 are extracellular.

Belongs to the ligand-gated ion channel (TC 1.A.9) family. Glycine receptor (TC 1.A.9.3) subfamily. GLRA2 sub-subfamily. As to quaternary structure, interacts with GLRB. Heteropentamer composed of GLRA2 and GLRB; functional GLRB-GLRA2 heteropentamers contain four GLRA2 subunits and one GLRB subunit, although alternative subunit composition cannot be excluded. Homopentamer (in vitro). Both homopentamers and heteropentamers form functional ion channels, but their characteristics are subtly different. In terms of tissue distribution, detected in the retina inner plexiform layer (at protein level). Detected in neonate retina. Detected in brain. Detected in spinal cord, with higher levels in the dorsal horn.

It localises to the postsynaptic cell membrane. The protein resides in the synapse. The protein localises to the cell membrane. Its subcellular location is the cell projection. It catalyses the reaction chloride(in) = chloride(out). With respect to regulation, channel opening is triggered by extracellular glycine. Channel opening is also triggered by taurine and beta-alanine. Inhibited by strychnine. Inhibited by picrotoxin. Its function is as follows. Subunit of heteromeric glycine-gated chloride channels. Plays a role in synaptic plasticity. Contributes to the generation of inhibitory postsynaptic currents, and is involved in the down-regulation of neuronal excitability. Plays a role in cellular responses to ethanol. This is Glycine receptor subunit alpha-2 from Mus musculus (Mouse).